The chain runs to 285 residues: 4-diphosphocytidyl-2-C-methyl-D-erythritol kinase (285 aa).

The active site involves lysine 14. 97–107 (PMGGGIGGGSS) is an ATP binding site. Aspartate 139 is a catalytic residue.

Belongs to the GHMP kinase family. IspE subfamily.

The enzyme catalyses 4-CDP-2-C-methyl-D-erythritol + ATP = 4-CDP-2-C-methyl-D-erythritol 2-phosphate + ADP + H(+). It functions in the pathway isoprenoid biosynthesis; isopentenyl diphosphate biosynthesis via DXP pathway; isopentenyl diphosphate from 1-deoxy-D-xylulose 5-phosphate: step 3/6. Its function is as follows. Catalyzes the phosphorylation of the position 2 hydroxy group of 4-diphosphocytidyl-2C-methyl-D-erythritol. The polypeptide is 4-diphosphocytidyl-2-C-methyl-D-erythritol kinase (Tolumonas auensis (strain DSM 9187 / NBRC 110442 / TA 4)).